Consider the following 222-residue polypeptide: Pyridoxine/pyridoxamine 5'-phosphate oxidase (222 aa).

Substrate-binding positions include 16 to 19 (RVSY) and Lys-75. Residues 70 to 75 (RTVLCK), 85 to 86 (FT), Lys-92, and Gln-114 contribute to the FMN site. Substrate-binding residues include Tyr-132, Arg-136, and Ser-140. FMN contacts are provided by residues 149 to 150 (QS) and Trp-195. 201-203 (RLH) lines the substrate pocket. Arg-205 is a binding site for FMN.

Belongs to the pyridoxamine 5'-phosphate oxidase family. Homodimer. The cofactor is FMN.

The catalysed reaction is pyridoxamine 5'-phosphate + O2 + H2O = pyridoxal 5'-phosphate + H2O2 + NH4(+). It catalyses the reaction pyridoxine 5'-phosphate + O2 = pyridoxal 5'-phosphate + H2O2. It participates in cofactor metabolism; pyridoxal 5'-phosphate salvage; pyridoxal 5'-phosphate from pyridoxamine 5'-phosphate: step 1/1. Its pathway is cofactor metabolism; pyridoxal 5'-phosphate salvage; pyridoxal 5'-phosphate from pyridoxine 5'-phosphate: step 1/1. Functionally, catalyzes the oxidation of either pyridoxine 5'-phosphate (PNP) or pyridoxamine 5'-phosphate (PMP) into pyridoxal 5'-phosphate (PLP). The polypeptide is Pyridoxine/pyridoxamine 5'-phosphate oxidase (Saccharopolyspora erythraea (strain ATCC 11635 / DSM 40517 / JCM 4748 / NBRC 13426 / NCIMB 8594 / NRRL 2338)).